An 81-amino-acid polypeptide reads, in one-letter code: Ferredoxin (81 aa).

Residues 2–30 (KYTIVDKETCIACGACGAAAPDIYDYDED) form the 4Fe-4S ferredoxin-type domain. Residues Cys11, Cys14, Cys17, and Cys61 each contribute to the [4Fe-4S] cluster site.

[4Fe-4S] cluster is required as a cofactor.

In terms of biological role, ferredoxins are iron-sulfur proteins that transfer electrons in a wide variety of metabolic reactions. The polypeptide is Ferredoxin (Bacillus thermoproteolyticus).